We begin with the raw amino-acid sequence, 150 residues long: Ribosome-binding factor A (150 aa).

The interval 131 to 150 (LSHDDDEDGGADEAPRNGDE) is disordered.

Belongs to the RbfA family. As to quaternary structure, monomer. Binds 30S ribosomal subunits, but not 50S ribosomal subunits or 70S ribosomes.

The protein localises to the cytoplasm. In terms of biological role, one of several proteins that assist in the late maturation steps of the functional core of the 30S ribosomal subunit. Associates with free 30S ribosomal subunits (but not with 30S subunits that are part of 70S ribosomes or polysomes). Required for efficient processing of 16S rRNA. May interact with the 5'-terminal helix region of 16S rRNA. This is Ribosome-binding factor A from Brucella melitensis biotype 2 (strain ATCC 23457).